The following is a 632-amino-acid chain: Golgin subfamily A member 8M (632 aa).

Residues 1-77 (MAEETQHNKL…SSATLKDLES (77 aa)) form a disordered region. A compositionally biased stretch (polar residues) spans 38-50 (TNGSIPQTATSGG). Coiled-coil stretches lie at residues 86–154 (LDSR…HMKR) and 209–421 (KLEQ…SLMA). Over residues 352 to 362 (KQEERIQEQHK) the composition is skewed to basic and acidic residues. Disordered regions lie at residues 352-384 (KQEE…NKST), 422-456 (LPGE…REAM), and 505-524 (DAAL…DEGE). Residues 508–520 (LGGGHHQAGAQGG) are compositionally biased toward gly residues.

It belongs to the GOLGA8 family.

This Homo sapiens (Human) protein is Golgin subfamily A member 8M.